The sequence spans 147 residues: Transcriptional repressor NrdR (147 aa).

A zinc finger spans residues 3 to 34; it reads CPFCGHEDTQVAETRESDEGDVIRRRRRCPSC. The ATP-cone domain maps to 49–139; that stretch reads PAIVKKDGSR…VYRSFEGVDE (91 aa).

The protein belongs to the NrdR family. Requires Zn(2+) as cofactor.

Its function is as follows. Negatively regulates transcription of bacterial ribonucleotide reductase nrd genes and operons by binding to NrdR-boxes. The polypeptide is Transcriptional repressor NrdR (Methylibium petroleiphilum (strain ATCC BAA-1232 / LMG 22953 / PM1)).